A 67-amino-acid polypeptide reads, in one-letter code: Protein AaeX (67 aa).

Transmembrane regions (helical) follow at residues 3-23 (VLPV…ELII) and 43-63 (LVWH…YLVS).

It belongs to the AaeX family.

The protein resides in the cell membrane. The sequence is that of Protein AaeX from Pantoea vagans (strain C9-1) (Pantoea agglomerans (strain C9-1)).